A 707-amino-acid chain; its full sequence is Trans-feruloyl-CoA synthase FCS1 (707 aa).

ATP is bound by residues histidine 267 and 524–535; that span reads ARAIGYPVVMKA. An ATP-grasp domain is found at 498-549; sequence KELLRPLGIAFPPSQFAANAEAAAAAARAIGYPVVMKAQAAALGHKSDAGGV.

The protein in the N-terminal section; belongs to the acetate CoA ligase alpha subunit family. It in the C-terminal section; belongs to the acetate CoA ligase beta subunit family. As to quaternary structure, homodimer.

The enzyme catalyses (E)-ferulate + ATP + CoA = (E)-feruloyl-CoA + ADP + phosphate. Functionally, catalyzes the formation of feruloyl-CoA, ADP and phosphate from ferulate, CoA and ATP. The protein is Trans-feruloyl-CoA synthase FCS1 of Unknown prokaryotic organism.